The chain runs to 320 residues: 4-diphosphocytidyl-2-C-methyl-D-erythritol kinase (320 aa).

Lysine 26 is a catalytic residue. An ATP-binding site is contributed by 111–121 (PVAGGMAGGSA). The active site involves aspartate 153.

It belongs to the GHMP kinase family. IspE subfamily.

The enzyme catalyses 4-CDP-2-C-methyl-D-erythritol + ATP = 4-CDP-2-C-methyl-D-erythritol 2-phosphate + ADP + H(+). It functions in the pathway isoprenoid biosynthesis; isopentenyl diphosphate biosynthesis via DXP pathway; isopentenyl diphosphate from 1-deoxy-D-xylulose 5-phosphate: step 3/6. Catalyzes the phosphorylation of the position 2 hydroxy group of 4-diphosphocytidyl-2C-methyl-D-erythritol. This Mycobacterium marinum (strain ATCC BAA-535 / M) protein is 4-diphosphocytidyl-2-C-methyl-D-erythritol kinase.